Reading from the N-terminus, the 231-residue chain is Cutinase 2 (231 aa).

An N-terminal signal peptide occupies residues 1 to 16 (MKFFALTTLLAATASA). C48 and C126 are oxidised to a cystine. S137 serves as the catalytic Nucleophile. A disulfide bridge connects residues C188 and C195. D192 is a catalytic residue. H205 serves as the catalytic Proton donor/acceptor.

Belongs to the cutinase family. In terms of processing, the 2 disulfide bonds play a critical role in holding the catalytic residues in juxta-position; reduction of the disulfide bridges results in the complete inactivation of the enzyme.

It localises to the secreted. The enzyme catalyses cutin + H2O = cutin monomers.. In terms of biological role, catalyzes the hydrolysis of complex carboxylic polyesters found in the cell wall of plants. Degrades cutin, a macromolecule that forms the structure of the plant cuticle. Allows pathogenic fungi to penetrate through the cuticular barrier into the host plant during the initial stage of fungal infection. The chain is Cutinase 2 (CUT2) from Fusarium vanettenii (Neocosmospora pisi).